We begin with the raw amino-acid sequence, 436 residues long: 3-ketoacyl-CoA thiolase (436 aa).

Catalysis depends on cysteine 99, which acts as the Acyl-thioester intermediate. Catalysis depends on proton acceptor residues histidine 392 and cysteine 422.

It belongs to the thiolase-like superfamily. Thiolase family. As to quaternary structure, heterotetramer of two alpha chains (FadJ) and two beta chains (FadI).

Its subcellular location is the cytoplasm. The catalysed reaction is an acyl-CoA + acetyl-CoA = a 3-oxoacyl-CoA + CoA. It participates in lipid metabolism; fatty acid beta-oxidation. Catalyzes the final step of fatty acid oxidation in which acetyl-CoA is released and the CoA ester of a fatty acid two carbons shorter is formed. This Shewanella amazonensis (strain ATCC BAA-1098 / SB2B) protein is 3-ketoacyl-CoA thiolase.